We begin with the raw amino-acid sequence, 162 residues long: Protein FAM162B (162 aa).

A disordered region spans residues 26–69 (EATRRPAPALPPRGLPCYSSGGAPSNSGPQGHGEIHRVPTQRRP). The chain crosses the membrane as a helical span at residues 107-127 (VKACYIMIGLTIIACFAVIVS).

Belongs to the UPF0389 family.

The protein resides in the membrane. The chain is Protein FAM162B (FAM162B) from Homo sapiens (Human).